Consider the following 148-residue polypeptide: Deoxyuridine 5'-triphosphate nucleotidohydrolase (148 aa).

Substrate is bound by residues 67–69, Asn-80, 84–86, and Met-94; these read RSG and LID.

The protein belongs to the dUTPase family. Requires Mg(2+) as cofactor.

The catalysed reaction is dUTP + H2O = dUMP + diphosphate + H(+). The protein operates within pyrimidine metabolism; dUMP biosynthesis; dUMP from dCTP (dUTP route): step 2/2. Its function is as follows. This enzyme is involved in nucleotide metabolism: it produces dUMP, the immediate precursor of thymidine nucleotides and it decreases the intracellular concentration of dUTP so that uracil cannot be incorporated into DNA. The sequence is that of Deoxyuridine 5'-triphosphate nucleotidohydrolase from Burkholderia mallei (strain NCTC 10247).